The sequence spans 232 residues: 5'-methylthioadenosine/S-adenosylhomocysteine nucleosidase (232 aa).

Glu12 acts as the Proton acceptor in catalysis. Substrate-binding positions include Gly78, Val152, and 173–174 (ME). Asp197 acts as the Proton donor in catalysis.

The protein belongs to the PNP/UDP phosphorylase family. MtnN subfamily. As to quaternary structure, homodimer.

It carries out the reaction S-adenosyl-L-homocysteine + H2O = S-(5-deoxy-D-ribos-5-yl)-L-homocysteine + adenine. The enzyme catalyses S-methyl-5'-thioadenosine + H2O = 5-(methylsulfanyl)-D-ribose + adenine. The catalysed reaction is 5'-deoxyadenosine + H2O = 5-deoxy-D-ribose + adenine. It functions in the pathway amino-acid biosynthesis; L-methionine biosynthesis via salvage pathway; S-methyl-5-thio-alpha-D-ribose 1-phosphate from S-methyl-5'-thioadenosine (hydrolase route): step 1/2. Catalyzes the irreversible cleavage of the glycosidic bond in both 5'-methylthioadenosine (MTA) and S-adenosylhomocysteine (SAH/AdoHcy) to adenine and the corresponding thioribose, 5'-methylthioribose and S-ribosylhomocysteine, respectively. Also cleaves 5'-deoxyadenosine, a toxic by-product of radical S-adenosylmethionine (SAM) enzymes, into 5-deoxyribose and adenine. Thus, is required for in vivo function of the radical SAM enzymes biotin synthase and lipoic acid synthase, that are inhibited by 5'-deoxyadenosine accumulation. This Buchnera aphidicola subsp. Acyrthosiphon pisum (strain APS) (Acyrthosiphon pisum symbiotic bacterium) protein is 5'-methylthioadenosine/S-adenosylhomocysteine nucleosidase.